The chain runs to 209 residues: Methylated-DNA--protein-cysteine methyltransferase (209 aa).

Cysteine 5 is a binding site for Zn(2+). Serine 14 carries the post-translational modification Phosphoserine. Zn(2+) is bound by residues cysteine 24, histidine 29, and histidine 89. DNA contacts are provided by threonine 99, tyrosine 118, glutamine 119, asparagine 127, and arginine 132. Cysteine 149 acts as the Nucleophile; methyl group acceptor in catalysis. Serine 155 serves as a coordination point for DNA.

Belongs to the MGMT family. The cofactor is Zn(2+).

The protein localises to the nucleus. The catalysed reaction is a 6-O-methyl-2'-deoxyguanosine in DNA + L-cysteinyl-[protein] = S-methyl-L-cysteinyl-[protein] + a 2'-deoxyguanosine in DNA. It catalyses the reaction a 4-O-methyl-thymidine in DNA + L-cysteinyl-[protein] = a thymidine in DNA + S-methyl-L-cysteinyl-[protein]. Involved in the cellular defense against the biological effects of O6-methylguanine (O6-MeG) and O4-methylthymine (O4-MeT) in DNA. Repairs the methylated nucleobase in DNA by stoichiometrically transferring the methyl group to a cysteine residue in the enzyme. This is a suicide reaction: the enzyme is irreversibly inactivated. This chain is Methylated-DNA--protein-cysteine methyltransferase (Mgmt), found in Rattus norvegicus (Rat).